The primary structure comprises 76 residues: Horsegram inhibitor 1 (76 aa).

Disulfide bonds link cysteine 16–cysteine 70, cysteine 17–cysteine 32, cysteine 20–cysteine 66, cysteine 22–cysteine 30, cysteine 40–cysteine 47, cysteine 44–cysteine 59, and cysteine 49–cysteine 57.

The protein belongs to the Bowman-Birk serine protease inhibitor family. In terms of assembly, HGI-III exists in a state of equilibrium between monomer, homodimer and trimer, with homodimer being the predominant form. The homodimer is stabilized by the non-covalent interaction between Lys-24 of one subunit and Asp-76 of the other subunit. The homodimer is more thermostable than the monomer. HGGI-I, HGGI-II and HGGI-III exist as monomers. HGGI-I, HGGI-II and HGGI-III are produced by proteolysis of the N- and C-termini of HGI-III.

Inhibitors of trypsin and chymotrypsin. HGGI-III has a higher activity than HGGI-I or HGGI-II. In Vigna unguiculata subsp. cylindrica (Horse gram), this protein is Horsegram inhibitor 1.